A 308-amino-acid chain; its full sequence is MGDDLFKEARKERDDFEELMNACDLAKMSVKNNEMVHGLETFGVNHGESSSENKPTEIMKVVAPTVEAYVGSSSSTTVTKPSGGAVDGIDQKEVRQDGTSVQKDDNGFIFYKCRFCGLTFNFMNTLRAHERIHDVSQPYVCGKCGESYEFACQLEYHAAQHSEIDGFKCDCGRTFFSYTEMLYHKHTDDPIELIGAPETTTVLVNKKKIIPVTEQDLPQPAFVTEGYEPKHPLRVYSDVRSKPYICEYCSKSYSDSRGLAYHMYSHRGEKQFNPRASRYMMGREGVGYTDSRSYYLFPRTSGYVSPRF.

C2H2-type zinc fingers lie at residues 111–133 and 139–161; these read YKCRFCGLTFNFMNTLRAHERIH and YVCGKCGESYEFACQLEYHAAQH. The segment at 166 to 186 adopts a C2H2-type 3; degenerate zinc-finger fold; sequence GFKCDCGRTFFSYTEMLYHKH. The C2H2-type 4 zinc finger occupies 244–266; the sequence is YICEYCSKSYSDSRGLAYHMYSH.

The protein resides in the nucleus. It is found in the cytoplasm. Its function is as follows. Probable transcription factor. Required for muscle structure. Its dual subcellular localization suggests that it may function both as a muscle adhesion complex protein and as a transcription factor, or work together with transcription factors, to influence gene expression. Thought to act as a molecular bridge between unc-97 and mhc-a at the M-line of muscles, possibly in a signaling role. This chain is Zinc finger protein unc-98, found in Caenorhabditis briggsae.